A 700-amino-acid chain; its full sequence is AP-2 complex subunit beta (700 aa).

A disordered region spans residues 625–700 (VGNSFPPTGA…RKLSMKRPFS (76 aa)). Ser-649 is subject to Phosphoserine. Thr-652 is modified (phosphothreonine). Positions 653–663 (AMMDDYDKPAE) are enriched in basic and acidic residues. Ser-683 bears the Phosphoserine mark.

It belongs to the adaptor complexes large subunit family. In terms of assembly, adaptor protein complex 2 (AP-2) is a heterotetramer composed of two large adaptins (alpha-type subunit APL3 and beta-type subunit APL1), a medium chain (mu-type subunit APM4) and a small adaptin (sigma-type subunit APS2). Interacts with APS2.

Its subcellular location is the cell membrane. The protein resides in the membrane. It is found in the coated pit. Its function is as follows. Adaptins are components of the adaptor complexes which link clathrin to receptors in coated vesicles. Clathrin-associated protein complexes are believed to interact with the cytoplasmic tails of membrane proteins, leading to their selection and concentration. Beta adaptin is a subunit of the plasma membrane adaptor. The protein is AP-2 complex subunit beta (APL1) of Saccharomyces cerevisiae (strain ATCC 204508 / S288c) (Baker's yeast).